A 91-amino-acid polypeptide reads, in one-letter code: Small ribosomal subunit protein uS19 (91 aa).

The protein belongs to the universal ribosomal protein uS19 family.

In terms of biological role, protein S19 forms a complex with S13 that binds strongly to the 16S ribosomal RNA. The protein is Small ribosomal subunit protein uS19 of Marinobacter nauticus (strain ATCC 700491 / DSM 11845 / VT8) (Marinobacter aquaeolei).